The following is a 108-amino-acid chain: Large ribosomal subunit protein uL23 (108 aa).

Belongs to the universal ribosomal protein uL23 family. As to quaternary structure, part of the 50S ribosomal subunit. Contacts protein L29, and trigger factor when it is bound to the ribosome.

Functionally, one of the early assembly proteins it binds 23S rRNA. One of the proteins that surrounds the polypeptide exit tunnel on the outside of the ribosome. Forms the main docking site for trigger factor binding to the ribosome. The chain is Large ribosomal subunit protein uL23 from Polaromonas naphthalenivorans (strain CJ2).